The sequence spans 98 residues: MSADPRHYDVIVAPVITEKATNLSELNKVVFRVAPKATKPQIKEAVERLFEVKVKSVNTLITKGKTKMFRGQRGQRSDVKKAIVTLEEGQTIDVTTGL.

Belongs to the universal ribosomal protein uL23 family. As to quaternary structure, part of the 50S ribosomal subunit. Contacts protein L29, and trigger factor when it is bound to the ribosome.

Functionally, one of the early assembly proteins it binds 23S rRNA. One of the proteins that surrounds the polypeptide exit tunnel on the outside of the ribosome. Forms the main docking site for trigger factor binding to the ribosome. The sequence is that of Large ribosomal subunit protein uL23 from Methylobacterium sp. (strain 4-46).